The following is a 211-amino-acid chain: Small ribosomal subunit protein uS3 (211 aa).

Positions 38–106 constitute a KH type-2 domain; it reads LRNFLKKRLY…EVYLNIQEVR (69 aa).

It belongs to the universal ribosomal protein uS3 family. Part of the 30S ribosomal subunit. Forms a tight complex with proteins S10 and S14.

Binds the lower part of the 30S subunit head. Binds mRNA in the 70S ribosome, positioning it for translation. This chain is Small ribosomal subunit protein uS3, found in Geobacter sp. (strain M21).